Consider the following 89-residue polypeptide: Small ribosomal subunit protein uS15 (89 aa).

This sequence belongs to the universal ribosomal protein uS15 family. In terms of assembly, part of the 30S ribosomal subunit. Forms a bridge to the 50S subunit in the 70S ribosome, contacting the 23S rRNA.

In terms of biological role, one of the primary rRNA binding proteins, it binds directly to 16S rRNA where it helps nucleate assembly of the platform of the 30S subunit by binding and bridging several RNA helices of the 16S rRNA. Its function is as follows. Forms an intersubunit bridge (bridge B4) with the 23S rRNA of the 50S subunit in the ribosome. The polypeptide is Small ribosomal subunit protein uS15 (Jannaschia sp. (strain CCS1)).